Reading from the N-terminus, the 297-residue chain is 4-diphosphocytidyl-2-C-methyl-D-erythritol kinase (297 aa).

The active site involves Lys19. Pro105–Ala115 provides a ligand contact to ATP. Residue Asp147 is part of the active site.

The protein belongs to the GHMP kinase family. IspE subfamily.

It catalyses the reaction 4-CDP-2-C-methyl-D-erythritol + ATP = 4-CDP-2-C-methyl-D-erythritol 2-phosphate + ADP + H(+). It participates in isoprenoid biosynthesis; isopentenyl diphosphate biosynthesis via DXP pathway; isopentenyl diphosphate from 1-deoxy-D-xylulose 5-phosphate: step 3/6. In terms of biological role, catalyzes the phosphorylation of the position 2 hydroxy group of 4-diphosphocytidyl-2C-methyl-D-erythritol. This Rhizobium etli (strain CIAT 652) protein is 4-diphosphocytidyl-2-C-methyl-D-erythritol kinase.